The following is a 295-amino-acid chain: UDP-N-acetylenolpyruvoylglucosamine reductase (295 aa).

The region spanning 26-189 is the FAD-binding PCMH-type domain; sequence VGGRADVLFK…VEAEFKGVNS (164 aa). Arg169 is a catalytic residue. The active-site Proton donor is the Cys218. The active site involves Glu288.

The protein belongs to the MurB family. FAD is required as a cofactor.

The protein localises to the cytoplasm. It catalyses the reaction UDP-N-acetyl-alpha-D-muramate + NADP(+) = UDP-N-acetyl-3-O-(1-carboxyvinyl)-alpha-D-glucosamine + NADPH + H(+). It participates in cell wall biogenesis; peptidoglycan biosynthesis. In terms of biological role, cell wall formation. This chain is UDP-N-acetylenolpyruvoylglucosamine reductase, found in Wolbachia pipientis wMel.